Reading from the N-terminus, the 108-residue chain is uncharacterized protein (108 aa).

Residues 74-108 are disordered; that stretch reads TGSKKRDSKANSRSRPSGTITSRGARIGLQGYKSH. The span at 84 to 95 shows a compositional bias: polar residues; the sequence is NSRSRPSGTITS.

This is an uncharacterized protein from Saccharomyces cerevisiae (strain ATCC 204508 / S288c) (Baker's yeast).